Here is an 88-residue protein sequence, read N- to C-terminus: MTEATQTARTLSGKVVSNKMDKSIVVLVERQVKHPLYGKYMKRSTKIHAHDESNQCNIGDTVTIQETRPVSKTKSWALVEVTERAAKV.

Belongs to the universal ribosomal protein uS17 family. Part of the 30S ribosomal subunit.

One of the primary rRNA binding proteins, it binds specifically to the 5'-end of 16S ribosomal RNA. The chain is Small ribosomal subunit protein uS17 from Marinobacter nauticus (strain ATCC 700491 / DSM 11845 / VT8) (Marinobacter aquaeolei).